Consider the following 208-residue polypeptide: Phosphoheptose isomerase (208 aa).

One can recognise an SIS domain in the interval 38-200 (MAVTLAKGHK…LFENVLALQP (163 aa)). A substrate-binding site is contributed by 53-55 (NGG). Positions 62 and 66 each coordinate Zn(2+). Substrate contacts are provided by residues glutamate 66, 95–96 (ND), 121–123 (STS), serine 126, and glutamine 173. The Zn(2+) site is built by glutamine 173 and histidine 181.

The protein belongs to the SIS family. GmhA subfamily. As to quaternary structure, homotetramer. It depends on Zn(2+) as a cofactor.

The protein localises to the cytoplasm. It catalyses the reaction 2 D-sedoheptulose 7-phosphate = D-glycero-alpha-D-manno-heptose 7-phosphate + D-glycero-beta-D-manno-heptose 7-phosphate. It participates in carbohydrate biosynthesis; D-glycero-D-manno-heptose 7-phosphate biosynthesis; D-glycero-alpha-D-manno-heptose 7-phosphate and D-glycero-beta-D-manno-heptose 7-phosphate from sedoheptulose 7-phosphate: step 1/1. Functionally, catalyzes the isomerization of sedoheptulose 7-phosphate in D-glycero-D-manno-heptose 7-phosphate. The protein is Phosphoheptose isomerase of Nitratidesulfovibrio vulgaris (strain ATCC 29579 / DSM 644 / CCUG 34227 / NCIMB 8303 / VKM B-1760 / Hildenborough) (Desulfovibrio vulgaris).